Reading from the N-terminus, the 95-residue chain is Aspartyl/glutamyl-tRNA(Asn/Gln) amidotransferase subunit C (95 aa).

This sequence belongs to the GatC family. In terms of assembly, heterotrimer of A, B and C subunits.

The enzyme catalyses L-glutamyl-tRNA(Gln) + L-glutamine + ATP + H2O = L-glutaminyl-tRNA(Gln) + L-glutamate + ADP + phosphate + H(+). The catalysed reaction is L-aspartyl-tRNA(Asn) + L-glutamine + ATP + H2O = L-asparaginyl-tRNA(Asn) + L-glutamate + ADP + phosphate + 2 H(+). Functionally, allows the formation of correctly charged Asn-tRNA(Asn) or Gln-tRNA(Gln) through the transamidation of misacylated Asp-tRNA(Asn) or Glu-tRNA(Gln) in organisms which lack either or both of asparaginyl-tRNA or glutaminyl-tRNA synthetases. The reaction takes place in the presence of glutamine and ATP through an activated phospho-Asp-tRNA(Asn) or phospho-Glu-tRNA(Gln). The polypeptide is Aspartyl/glutamyl-tRNA(Asn/Gln) amidotransferase subunit C (Desulfosudis oleivorans (strain DSM 6200 / JCM 39069 / Hxd3) (Desulfococcus oleovorans)).